Here is a 411-residue protein sequence, read N- to C-terminus: Anaerobic sulfatase-maturating enzyme homolog AslB (411 aa).

In terms of domain architecture, Radical SAM core spans 3-250 (QQVPTRAFHV…LVAIFDHWIK (248 aa)). [4Fe-4S] cluster-binding residues include Cys21 and Cys25. Tyr27 contacts S-adenosyl-L-methionine. Residue Cys28 coordinates [4Fe-4S] cluster. Residues Gly74, Ser129, and Arg141 each coordinate S-adenosyl-L-methionine. Cys276, Cys282, and Cys297 together coordinate [4Fe-4S] cluster. Asp298 serves as the catalytic Proton acceptor. [4Fe-4S] cluster contacts are provided by Cys339, Cys342, Cys348, Cys352, and Cys371.

Belongs to the radical SAM superfamily. Anaerobic sulfatase-maturating enzyme family. It depends on [4Fe-4S] cluster as a cofactor.

The chain is Anaerobic sulfatase-maturating enzyme homolog AslB (aslB) from Escherichia coli (strain K12).